Consider the following 351-residue polypeptide: MTIAIGQNQERGIFDLIDDWLKKDRFVFVGWSGLLLFPTAYLAVGGWMTGTTFVTSWYTHGLASSYLEGCNFLTAAVSSPANSMGHSLLLLWGPEAQGDFTRWCQIGGLWTFVALHGSFGLIGFCLRQFEIARLVGIRPYNAIAFSGPIAVFVSVFLLYPLGQASWFFAPSFGVAAIFRFLLFLQGFHNWTLNPFHMMGVAGILGGALLCAIHGATVENTLFEDGDAANTFRAFTPTQSEETYSMVTANRFWSQIFGVAFSNKRWLHFFMLFVPVTGLWTSAIGIVGLALNLRAYDFVSQELRAAEDPEFETFYTKNILLNEGIRAWMAAQDQPHENFVFPEEVLPRGNAL.

A helical membrane pass occupies residues 39-59; it reads TAYLAVGGWMTGTTFVTSWYT. Position 116 (histidine 116) interacts with chlorophyll a. A helical transmembrane segment spans residues 123–139; the sequence is GFCLRQFEIARLVGIRP. Residues glutamine 128 and asparagine 141 each contribute to the pheophytin a site. A helical transmembrane segment spans residues 151–164; sequence VFVSVFLLYPLGQA. Chlorophyll a is bound at residue histidine 196. The chain crosses the membrane as a helical span at residues 206 to 226; it reads GALLCAIHGATVENTLFEDGD. The a plastoquinone site is built by histidine 213 and phenylalanine 260. Histidine 213 serves as a coordination point for Fe cation. Histidine 267 is a Fe cation binding site. Residues 277 to 293 form a helical membrane-spanning segment; the sequence is GLWTSAIGIVGLALNLR.

Belongs to the reaction center PufL/M/PsbA/D family. As to quaternary structure, PSII is composed of 1 copy each of membrane proteins PsbA, PsbB, PsbC, PsbD, PsbE, PsbF, PsbH, PsbI, PsbJ, PsbK, PsbL, PsbM, PsbT, PsbX, PsbY, PsbZ, Psb30/Ycf12, at least 3 peripheral proteins of the oxygen-evolving complex and a large number of cofactors. It forms dimeric complexes. Requires The D1/D2 heterodimer binds P680, chlorophylls that are the primary electron donor of PSII, and subsequent electron acceptors. It shares a non-heme iron and each subunit binds pheophytin, quinone, additional chlorophylls, carotenoids and lipids. There is also a Cl(-1) ion associated with D1 and D2, which is required for oxygen evolution. The PSII complex binds additional chlorophylls, carotenoids and specific lipids. as cofactor.

It localises to the plastid. The protein localises to the chloroplast thylakoid membrane. The enzyme catalyses 2 a plastoquinone + 4 hnu + 2 H2O = 2 a plastoquinol + O2. Functionally, photosystem II (PSII) is a light-driven water:plastoquinone oxidoreductase that uses light energy to abstract electrons from H(2)O, generating O(2) and a proton gradient subsequently used for ATP formation. It consists of a core antenna complex that captures photons, and an electron transfer chain that converts photonic excitation into a charge separation. The D1/D2 (PsbA/PsbD) reaction center heterodimer binds P680, the primary electron donor of PSII as well as several subsequent electron acceptors. D2 is needed for assembly of a stable PSII complex. This is Photosystem II D2 protein from Phaeodactylum tricornutum (strain CCAP 1055/1).